The primary structure comprises 199 residues: Pyridoxine/pyridoxamine 5'-phosphate oxidase (199 aa).

FMN is bound by residues 44–49 (RTVLLK), 59–60 (YT), Lys-66, and Gln-91. Residue Lys-49 participates in substrate binding. 3 residues coordinate substrate: Tyr-109, Arg-113, and Ser-117. Residues 126–127 (QS) and Trp-171 contribute to the FMN site. Position 177 to 179 (177 to 179 (RLH)) interacts with substrate. Arg-181 is a binding site for FMN.

This sequence belongs to the pyridoxamine 5'-phosphate oxidase family. In terms of assembly, homodimer. FMN serves as cofactor.

The catalysed reaction is pyridoxamine 5'-phosphate + O2 + H2O = pyridoxal 5'-phosphate + H2O2 + NH4(+). The enzyme catalyses pyridoxine 5'-phosphate + O2 = pyridoxal 5'-phosphate + H2O2. The protein operates within cofactor metabolism; pyridoxal 5'-phosphate salvage; pyridoxal 5'-phosphate from pyridoxamine 5'-phosphate: step 1/1. It participates in cofactor metabolism; pyridoxal 5'-phosphate salvage; pyridoxal 5'-phosphate from pyridoxine 5'-phosphate: step 1/1. Catalyzes the oxidation of either pyridoxine 5'-phosphate (PNP) or pyridoxamine 5'-phosphate (PMP) into pyridoxal 5'-phosphate (PLP). The sequence is that of Pyridoxine/pyridoxamine 5'-phosphate oxidase from Xanthomonas axonopodis pv. citri (strain 306).